The primary structure comprises 325 residues: L-lactate dehydrogenase 1 (325 aa).

Residues Val17, Asp38, Lys43, Tyr68, and 82–83 (GA) each bind NAD(+). Residues Gln85, Arg91, and 123–126 (NPVD) contribute to the substrate site. NAD(+) contacts are provided by residues 121-123 (AAN) and Ser146. 151 to 154 (DTAR) contributes to the substrate binding site. Residues Arg156 and His171 each coordinate beta-D-fructose 1,6-bisphosphate. His178 (proton acceptor) is an active-site residue. Tyr223 is modified (phosphotyrosine). Thr232 is a substrate binding site.

Belongs to the LDH/MDH superfamily. LDH family. In terms of assembly, homotetramer.

Its subcellular location is the cytoplasm. The enzyme catalyses (S)-lactate + NAD(+) = pyruvate + NADH + H(+). It participates in fermentation; pyruvate fermentation to lactate; (S)-lactate from pyruvate: step 1/1. Allosterically activated by fructose 1,6-bisphosphate (FBP). In terms of biological role, catalyzes the conversion of lactate to pyruvate. The sequence is that of L-lactate dehydrogenase 1 from Lactococcus lactis subsp. cremoris (Streptococcus cremoris).